The chain runs to 1480 residues: MHTTTQATPQKSMVMTTTNGGGVDPPQWPEEEEDEDAAAGSSCRVTAANGHHHHHQQLVVSGELGGGGGGGGGGREKEDDELKRKWAAIERLPTADRLRLSLLSSTRGGGSSGDVSEGGGGGAASSELEVVDVRWLGAAERRAVVQRLVADVKHDHVRMLRKQRERMERVGVRPATVEVRWRDVCVEAECQVVSGKPLPTLWNAALSRFSLLAAKLGFSHHQSKVQILENVSGIIKPSRITLLLGPPGCGKTTLLKALAGRLNKSLKETGEIEYNGVKLDEFVPAKTSAYVSQYDLHVADMTVRETLDFSARFQGVGSRAEIMKAVIKREKEAGITPDPDIDAYMKAISMEGLQRSMQTDYIMKIMGLDKCADVKVGNAMRRGISGGEMKRLTTGEMIVGPCKVLLMDEISTGLDSSTTFQIVSCLQQLAHISEYTILVSLLQPAPETYDLFDDIIIMGEGKVVYHGPKNLIMTFFESCGFKCPERKGPADFLQEVLSKKDQQQYWSRSEQWYNFITVDQFCDKFKASQVGQSLAEDLSKLYEKSKANKNALSCSIYSLSKWHLLKACFDRELLLMKRNAFLHITKAVQLGLLAIITGTVFFRTHKNFDIVSANYYMGSLFYALILLMVNGIPELVMSISRLPVFYKHRDHYLYPGWAYAIPAFILKIPASLVAALSWTSISYYLIGYTPEAPRYFRQLLVLFLVHTGALSLYRCVGSYCQTIAVGPIAATMSLLVILLFGGFLIPRPSMPNWLKWGFWLSPLSYAEIGLTGNEFLAPRWLKITISGVTIGRRILIDRGLDFSVYFYWISVAALIGFILLYNIGFAIGLTIKQSPGASQAIISNDKIRICHGRDQEKSKDIKIGTRRMALPFTPLTISFQDVNYYVDTPPEMRKKGYMGRKLQLLRNITGAFQPGILSALMGVTGAGKTTLLDVLAGRKTGGVIEGDIRIGGYPKVQQTFSRISGYCEQNDVHSPQITVGESVAYSAWLRLPAEIDTKTRKEFVDEVLEIIELDEIRDALVGTPGVNGLSREQRKRLTIAVELVSNPSIVFMDEPTSGLDARAAAIAMRAVKNVAETGRTVVCTIHQPSIEIFEAFDELMLIKRGGELIYAGPLGQHSCKVIQYFQSIPGVPKIKDNYNPSTWMLEVTSTSMEAQLGVDFAQIYTGSSIRKDKDELIKGFSMPPPGTSDLHFPTRFPQKFLEQFKACLWKQFLSHWRTPSYNLVRIVFMAFSSIIFGVLYWQQGNIRHINDQQGLFTILGCMYGITIFTGINNSQSAMPFVAVERSVMYRERFAGMYSPWAYSFAQVAMEIPYVLMLALLFMLIAYPTIGYAWTAAKFCWFFYTMFCTLLYFVYFGMLIVSITPNLQVASIYASSFYMTQHLLSGFVMPPSQIPKWWIWLYYISPMSWTLNLLFTTQFGFEDNSNILVFGETKPIAAFVRDYFGFHRELLPLSAIILAAYPVLFAILYGYSISRFNFQKR.

Over residues 1-18 (MHTTTQATPQKSMVMTTT) the composition is skewed to polar residues. Disordered regions lie at residues 1-42 (MHTT…AGSS), 60-81 (VSGELGGGGGGGGGGREKEDDE), and 104-124 (SSTRGGGSSGDVSEGGGGGAA). 2 stretches are compositionally biased toward gly residues: residues 63 to 73 (ELGGGGGGGGG) and 107 to 123 (RGGGSSGDVSEGGGGGA). The ABC transporter 1 domain occupies 212 to 485 (LAAKLGFSHH…FESCGFKCPE (274 aa)). Position 245 to 252 (245 to 252 (GPPGCGKT)) interacts with ATP. Positions 563 to 775 (HLLKACFDRE…AEIGLTGNEF (213 aa)) constitute an ABC transmembrane type-2 1 domain. Transmembrane regions (helical) follow at residues 581–601 (FLHITKAVQLGLLAIITGTVF), 619–639 (SLFYALILLMVNGIPELVMSI), 656–676 (GWAYAIPAFILKIPASLVAAL), 699–719 (LLVLFLVHTGALSLYRCVGSY), 725–745 (VGPIAATMSLLVILLFGGFLI), and 811–831 (VAALIGFILLYNIGFAIGLTI). The ABC transporter 2 domain maps to 877 to 1129 (ISFQDVNYYV…KVIQYFQSIP (253 aa)). Residue 922–929 (GVTGAGKT) coordinates ATP. Positions 1202-1418 (EQFKACLWKQ…TLNLLFTTQF (217 aa)) constitute an ABC transmembrane type-2 2 domain. Transmembrane regions (helical) follow at residues 1226-1246 (IVFMAFSSIIFGVLYWQQGNI), 1254-1274 (GLFTILGCMYGITIFTGINNS), 1311-1331 (IPYVLMLALLFMLIAYPTIGY), 1340-1360 (WFFYTMFCTLLYFVYFGMLIV), 1368-1388 (VASIYASSFYMTQHLLSGFVM), 1396-1416 (WWIWLYYISPMSWTLNLLFTT), and 1449-1469 (LLPLSAIILAAYPVLFAILYG).

It belongs to the ABC transporter superfamily. ABCG family. PDR (TC 3.A.1.205) subfamily.

The protein localises to the membrane. Functionally, may be a general defense protein. The protein is ABC transporter G family member 49 of Oryza sativa subsp. japonica (Rice).